A 523-amino-acid polypeptide reads, in one-letter code: Protein tweety homolog 3 (523 aa).

Residues 1 to 42 are Extracellular-facing; it reads MAGVSYAAPWWVSLLHRLPHFDLSWEATSSQFRPEDTDYQQA. Residues 43-63 traverse the membrane as a helical segment; it reads LLLLGAAALACLALDLLFLLF. Over 64 to 86 the chain is Cytoplasmic; it reads YSFWLCCRRRKSEEHLDADCCCT. The helical transmembrane segment at 87-107 threads the bilayer; that stretch reads AWCVIIATLVCSAGIAVGFYG. Residues 108-211 lie on the Extracellular side of the membrane; it reads NGETSDGIHR…VDLYDWYRWL (104 aa). Ca(2+) contacts are provided by Glu-110 and Asp-113. N-linked (GlcNAc...) asparagine glycans are attached at residues Asn-126 and Asn-144. Residues 212 to 232 form a helical membrane-spanning segment; the sequence is GYLGLLLLDVIICLLVLVGLI. Residues 233-236 lie on the Cytoplasmic side of the membrane; the sequence is RSSK. A helical membrane pass occupies residues 237–257; it reads GILVGVCLLGVLALVISWGAL. Topologically, residues 258–386 are extracellular; that stretch reads GLELAVSVGS…LTGFCYDGVE (129 aa). Disulfide bonds link Cys-271–Cys-381 and Cys-299–Cys-366. An N-linked (GlcNAc...) asparagine glycan is attached at Asn-351. A helical transmembrane segment spans residues 387 to 407; the sequence is GLIYLALFSFVTALMFSSIVC. Residues 408–523 lie on the Cytoplasmic side of the membrane; it reads SVPHTWQQKR…QPRPDSSGSH (116 aa). 2 disordered regions span residues 413–435 and 482–523; these read WQQK…RQAH and QNPR…SGSH. Residue Ser-496 is modified to Phosphoserine. The PY-motif; mediates interaction with NEDD4L motif lies at 498-501; it reads PPSY. Residues 501–523 show a composition bias toward polar residues; it reads YTSSMRAKYLATSQPRPDSSGSH. Ser-504 and Ser-522 each carry phosphoserine.

Belongs to the tweety family. In terms of assembly, homotetramer; disulfide-linked. Homodimer. Interacts with NEDD4L. Post-translationally, ubiquitinated by NEDD4L. In terms of processing, N-Glycosylated. Contains high-mannose, hybrid and complex oligosaccharides. As to expression, expressed in excitable tissues. Expressed in the brain, heart, skeletal muscle, colon, spleen, kidney and peripheral blood leukocytes.

It localises to the cell membrane. The catalysed reaction is chloride(in) = chloride(out). It carries out the reaction L-glutamate(out) = L-glutamate(in). Functionally, calcium-independent, swelling-dependent volume-regulated anion channel (VRAC-swell) which plays a pivotal role in the process of regulatory volume decrease (RVD) in the brain through the efflux of anions like chloride and organic osmolytes like glutamate. Probable large-conductance Ca(2+)-activated chloride channel. The polypeptide is Protein tweety homolog 3 (TTYH3) (Homo sapiens (Human)).